The following is a 395-amino-acid chain: Putative 8-amino-7-oxononanoate synthase (395 aa).

Residue arginine 23 coordinates substrate. Pyridoxal 5'-phosphate is bound at residue 110–111 (GF). Histidine 135 is a substrate binding site. Pyridoxal 5'-phosphate-binding positions include serine 182, 207–210 (DEAH), and 239–242 (TFSK). At lysine 242 the chain carries N6-(pyridoxal phosphate)lysine. Threonine 356 is a substrate binding site.

It belongs to the class-II pyridoxal-phosphate-dependent aminotransferase family. BioF subfamily. Homodimer. Pyridoxal 5'-phosphate is required as a cofactor.

It carries out the reaction 6-carboxyhexanoyl-[ACP] + L-alanine + H(+) = (8S)-8-amino-7-oxononanoate + holo-[ACP] + CO2. It participates in cofactor biosynthesis; biotin biosynthesis. Functionally, catalyzes the decarboxylative condensation of pimeloyl-[acyl-carrier protein] and L-alanine to produce 8-amino-7-oxononanoate (AON), [acyl-carrier protein], and carbon dioxide. This chain is Putative 8-amino-7-oxononanoate synthase (bioF), found in Bacillus anthracis.